The following is a 115-amino-acid chain: Large ribosomal subunit protein bL19 (115 aa).

It belongs to the bacterial ribosomal protein bL19 family.

Its function is as follows. This protein is located at the 30S-50S ribosomal subunit interface and may play a role in the structure and function of the aminoacyl-tRNA binding site. The protein is Large ribosomal subunit protein bL19 of Streptococcus pyogenes serotype M2 (strain MGAS10270).